The sequence spans 132 residues: Small ribosomal subunit protein uS8 (132 aa).

The protein belongs to the universal ribosomal protein uS8 family. As to quaternary structure, part of the 30S ribosomal subunit. Contacts proteins S5 and S12.

Functionally, one of the primary rRNA binding proteins, it binds directly to 16S rRNA central domain where it helps coordinate assembly of the platform of the 30S subunit. This is Small ribosomal subunit protein uS8 from Corynebacterium glutamicum (strain R).